The sequence spans 426 residues: Probable imidazolonepropionase (426 aa).

Residues Y158 and H192 each coordinate 4-imidazolone-5-propanoate. Residue Y158 participates in N-formimidoyl-L-glutamate binding. A Fe(3+)-binding site is contributed by H260. H260 provides a ligand contact to Zn(2+). 4-imidazolone-5-propanoate is bound at residue E263. A Fe(3+)-binding site is contributed by D334. D334 provides a ligand contact to Zn(2+). N336 contributes to the N-formimidoyl-L-glutamate binding site.

The protein belongs to the metallo-dependent hydrolases superfamily. HutI family. Zn(2+) serves as cofactor. Requires Fe(3+) as cofactor.

It carries out the reaction 4-imidazolone-5-propanoate + H2O = N-formimidoyl-L-glutamate. The protein operates within amino-acid degradation; L-histidine degradation into L-glutamate; N-formimidoyl-L-glutamate from L-histidine: step 3/3. This Dictyostelium discoideum (Social amoeba) protein is Probable imidazolonepropionase (amdhd1).